Reading from the N-terminus, the 427-residue chain is MMGKLPLGVVSPYVKMSSGGCSDPLKFYATSYCTAYGREEFKPRLGSHVGTGYKSNYRPLVSYQPHLDTLDNPAIGQQIRDTSKSVTSQSYSPLEVPDGKQPLPWNLHQTTSSYGREKLNPGPHSKEVRKVHFDTQDHGPQTITGLEPKEVPLIHQQQGKGSTEWENSHYGPRFMTSEYNSKYIKESPNHPDLLLKKTIGSKEETGFTEESTKNPIVFQPPSQAFPGDPVLHPGRSITKSDYLPVTHPQGSDFLPVLSRGSDRDTGFSRVNERTLNPRVPTPAPQPASMSHRSYQPPQRMQQTNVALLGRESVGNKEPTGFTLNNPSYVRSSYEQDRDQRYLTTYNQGYFENIPKGLDREGWTRGGIQPQKAGAYALSELNNHTLMDSTPNPTETLRHLHPHVGRTLASVDPFYRDMPHSSRYPASS.

Disordered stretches follow at residues 82–105, 273–298, and 314–335; these read TSKS…PLPW, RTLN…QPPQ, and GNKE…SYEQ. Composition is skewed to polar residues over residues 287–298 and 321–332; these read ASMSHRSYQPPQ and FTLNNPSYVRSS.

In terms of assembly, microtubule inner protein component of sperm flagellar doublet microtubules. Interacts with PPP1CA.

It localises to the cell projection. Its subcellular location is the cilium. It is found in the cytoplasm. The protein localises to the cytoskeleton. The protein resides in the flagellum axoneme. This chain is Stabilizer of axonemal microtubules 4, found in Mus musculus (Mouse).